The chain runs to 219 residues: Large ribosomal subunit protein bL31m (219 aa).

Composition is skewed to basic and acidic residues over residues K169–E181 and K210–K219. Disordered stretches follow at residues K169 to F188 and T200 to K219.

This sequence belongs to the bacterial ribosomal protein bL31 family. Highly divergent. In terms of assembly, component of the mitochondrial large ribosomal subunit (mt-LSU). Mature N.crassa 74S mitochondrial ribosomes consist of a small (37S) and a large (54S) subunit. The 37S small subunit contains a 16S ribosomal RNA (16S mt-rRNA) and 32 different proteins. The 54S large subunit contains a 23S rRNA (23S mt-rRNA) and 42 different proteins. bL31m bridges the mt-LSU central protuberance and the mt-SSU head.

The protein resides in the mitochondrion. Its function is as follows. Component of the mitochondrial ribosome (mitoribosome), a dedicated translation machinery responsible for the synthesis of mitochondrial genome-encoded proteins, including at least some of the essential transmembrane subunits of the mitochondrial respiratory chain. The mitoribosomes are attached to the mitochondrial inner membrane and translation products are cotranslationally integrated into the membrane. The sequence is that of Large ribosomal subunit protein bL31m (mrpl36) from Neurospora crassa (strain ATCC 24698 / 74-OR23-1A / CBS 708.71 / DSM 1257 / FGSC 987).